Consider the following 200-residue polypeptide: Protein GrpE (200 aa).

This sequence belongs to the GrpE family. Homodimer.

It localises to the cytoplasm. Its function is as follows. Participates actively in the response to hyperosmotic and heat shock by preventing the aggregation of stress-denatured proteins, in association with DnaK and GrpE. It is the nucleotide exchange factor for DnaK and may function as a thermosensor. Unfolded proteins bind initially to DnaJ; upon interaction with the DnaJ-bound protein, DnaK hydrolyzes its bound ATP, resulting in the formation of a stable complex. GrpE releases ADP from DnaK; ATP binding to DnaK triggers the release of the substrate protein, thus completing the reaction cycle. Several rounds of ATP-dependent interactions between DnaJ, DnaK and GrpE are required for fully efficient folding. This Geobacter sulfurreducens (strain ATCC 51573 / DSM 12127 / PCA) protein is Protein GrpE.